A 422-amino-acid polypeptide reads, in one-letter code: UDP-N-acetylglucosamine 1-carboxyvinyltransferase (422 aa).

22–23 (KN) serves as a coordination point for phosphoenolpyruvate. Arg-93 contributes to the UDP-N-acetyl-alpha-D-glucosamine binding site. Cys-117 functions as the Proton donor in the catalytic mechanism. Cys-117 bears the 2-(S-cysteinyl)pyruvic acid O-phosphothioketal mark. UDP-N-acetyl-alpha-D-glucosamine is bound by residues 122–126 (RPVDL), Asp-308, and Leu-330.

It belongs to the EPSP synthase family. MurA subfamily.

It is found in the cytoplasm. The enzyme catalyses phosphoenolpyruvate + UDP-N-acetyl-alpha-D-glucosamine = UDP-N-acetyl-3-O-(1-carboxyvinyl)-alpha-D-glucosamine + phosphate. It participates in cell wall biogenesis; peptidoglycan biosynthesis. Cell wall formation. Adds enolpyruvyl to UDP-N-acetylglucosamine. The polypeptide is UDP-N-acetylglucosamine 1-carboxyvinyltransferase (Helicobacter pylori (strain J99 / ATCC 700824) (Campylobacter pylori J99)).